A 353-amino-acid polypeptide reads, in one-letter code: Protein-glutamate methylesterase/protein-glutamine glutaminase 3 (353 aa).

The 118-residue stretch at K3–A120 folds into the Response regulatory domain. At D54 the chain carries 4-aspartylphosphate. The 196-residue stretch at P158–R353 folds into the CheB-type methylesterase domain. Active-site residues include S173, H200, and D296.

Belongs to the CheB family. Post-translationally, phosphorylated by CheA. Phosphorylation of the N-terminal regulatory domain activates the methylesterase activity.

The protein resides in the cytoplasm. The catalysed reaction is [protein]-L-glutamate 5-O-methyl ester + H2O = L-glutamyl-[protein] + methanol + H(+). It carries out the reaction L-glutaminyl-[protein] + H2O = L-glutamyl-[protein] + NH4(+). In terms of biological role, involved in chemotaxis. Part of a chemotaxis signal transduction system that modulates chemotaxis in response to various stimuli. Catalyzes the demethylation of specific methylglutamate residues introduced into the chemoreceptors (methyl-accepting chemotaxis proteins or MCP) by CheR. Also mediates the irreversible deamidation of specific glutamine residues to glutamic acid. The polypeptide is Protein-glutamate methylesterase/protein-glutamine glutaminase 3 (Syntrophomonas wolfei subsp. wolfei (strain DSM 2245B / Goettingen)).